A 423-amino-acid polypeptide reads, in one-letter code: SH2 domain-containing adapter protein F (423 aa).

3 disordered regions span residues 1 to 87 (MQQE…STTR), 110 to 208 (DPFD…WEWK), and 225 to 312 (DLPW…GEWT). Residues 192 to 203 (EDDERPPEEYDQ) are compositionally biased toward acidic residues. The residue at position 201 (Y201) is a Phosphotyrosine. Residues 323–418 (WYHGAISRTD…AEHMSLLYPV (96 aa)) enclose the SH2 domain.

Interacts with phosphorylated 'Tyr-720' of PDGFRA via its SH2 domain. May become phosphorylated upon binding to PDGFRA. In terms of tissue distribution, expressed in skeletal muscle, brain, liver, prostate, testis, ovary, small intestine and colon.

Adapter protein which may play a role in the regulation of apoptosis in response to PDGF. The sequence is that of SH2 domain-containing adapter protein F from Homo sapiens (Human).